The chain runs to 416 residues: Serine hydroxymethyltransferase (416 aa).

(6S)-5,6,7,8-tetrahydrofolate contacts are provided by residues Leu-121 and 125–127 (GHL). Residue Lys-230 is modified to N6-(pyridoxal phosphate)lysine. 354-356 (SPF) is a binding site for (6S)-5,6,7,8-tetrahydrofolate.

Belongs to the SHMT family. In terms of assembly, homodimer. Pyridoxal 5'-phosphate is required as a cofactor.

The protein resides in the cytoplasm. It carries out the reaction (6R)-5,10-methylene-5,6,7,8-tetrahydrofolate + glycine + H2O = (6S)-5,6,7,8-tetrahydrofolate + L-serine. It functions in the pathway one-carbon metabolism; tetrahydrofolate interconversion. Its pathway is amino-acid biosynthesis; glycine biosynthesis; glycine from L-serine: step 1/1. Catalyzes the reversible interconversion of serine and glycine with tetrahydrofolate (THF) serving as the one-carbon carrier. This reaction serves as the major source of one-carbon groups required for the biosynthesis of purines, thymidylate, methionine, and other important biomolecules. Also exhibits THF-independent aldolase activity toward beta-hydroxyamino acids, producing glycine and aldehydes, via a retro-aldol mechanism. The sequence is that of Serine hydroxymethyltransferase from Prochlorococcus marinus (strain MIT 9211).